The following is a 223-amino-acid chain: RNA-free ribonuclease P (223 aa).

Belongs to the HARP family.

It carries out the reaction Endonucleolytic cleavage of RNA, removing 5'-extranucleotides from tRNA precursor.. Its function is as follows. RNA-free RNase P that catalyzes the removal of the 5'-leader sequence from pre-tRNA to produce the mature 5'-terminus. In Methanococcus maripaludis (strain DSM 14266 / JCM 13030 / NBRC 101832 / S2 / LL), this protein is RNA-free ribonuclease P.